Reading from the N-terminus, the 420-residue chain is Serine hydroxymethyltransferase (420 aa).

(6S)-5,6,7,8-tetrahydrofolate contacts are provided by residues Leu-123 and 127-129 (GHL). Position 232 is an N6-(pyridoxal phosphate)lysine (Lys-232).

This sequence belongs to the SHMT family. In terms of assembly, homodimer. The cofactor is pyridoxal 5'-phosphate.

It localises to the cytoplasm. It carries out the reaction (6R)-5,10-methylene-5,6,7,8-tetrahydrofolate + glycine + H2O = (6S)-5,6,7,8-tetrahydrofolate + L-serine. It functions in the pathway one-carbon metabolism; tetrahydrofolate interconversion. The protein operates within amino-acid biosynthesis; glycine biosynthesis; glycine from L-serine: step 1/1. Functionally, catalyzes the reversible interconversion of serine and glycine with tetrahydrofolate (THF) serving as the one-carbon carrier. This reaction serves as the major source of one-carbon groups required for the biosynthesis of purines, thymidylate, methionine, and other important biomolecules. Also exhibits THF-independent aldolase activity toward beta-hydroxyamino acids, producing glycine and aldehydes, via a retro-aldol mechanism. The polypeptide is Serine hydroxymethyltransferase (Ehrlichia chaffeensis (strain ATCC CRL-10679 / Arkansas)).